We begin with the raw amino-acid sequence, 3174 residues long: Intermembrane lipid transfer protein VPS13A (3174 aa).

Residues 3-116 form the Chorein N-terminal domain; that stretch reads FESVVVDVLN…LMEAKQQELK (114 aa). TPR repeat units follow at residues 212 to 245, 373 to 406, and 537 to 575; these read LFAY…ENIV, LTSK…QTAE, and IDSF…NPLD. Residue Ser839 is modified to Phosphoserine. The short motif at 842-848 is the FFAT element; that stretch reads EFFDAPC. TPR repeat units lie at residues 1256-1289 and 1291-1320; these read VIDL…LLPL and LEVV…KPME. Ser1416 bears the Phosphoserine mark. The stretch at 2009–2041 is one TPR 6 repeat; sequence YEGDTLLGTASPENEFNIPLGSYRSFIFLKPED. The SHR-BD domain occupies 2209–2454; it reads VAFHSPYWMV…VFYTWADPVG (246 aa). TPR repeat units lie at residues 2568–2601, 2717–2751, and 2860–2898; these read PMSV…DTNV, LGFI…FKEE, and ILGL…PEEF. The tract at residues 2751 to 3174 is required for mitochondrial localization; the sequence is EYKTASLVDQ…QEAREPSPSL (424 aa). Positions 2953-3027 are required for lipid droplet localization; it reads PAGFREGITR…SSTFQGIKRA (75 aa). The stretch at 3086 to 3119 is one TPR 10 repeat; that stretch reads MLMITRRGVLFVTKGTFGQLTCEWQYSFDEFTKE.

Belongs to the VPS13 family. Interacts (via FFAT motif) with VAPA and VAPB. Interacts with RAB7A. Interacts with XK. Expressed in red blood cells (at protein level). Widely expressed, with high expression in brain, heart, skeletal muscle and kidney.

It localises to the mitochondrion outer membrane. The protein resides in the endoplasmic reticulum membrane. The protein localises to the endosome membrane. Its subcellular location is the lysosome membrane. It is found in the lipid droplet. It localises to the golgi apparatus. The protein resides in the cytoplasmic vesicle. The protein localises to the secretory vesicle. Its subcellular location is the neuronal dense core vesicle. Functionally, mediates the transfer of lipids between membranes at organelle contact sites. Binds phospholipids. Required for the formation or stabilization of ER-mitochondria contact sites which enable transfer of lipids between the ER and mitochondria. Negatively regulates lipid droplet size and motility. Required for efficient lysosomal protein degradation. The polypeptide is Intermembrane lipid transfer protein VPS13A (VPS13A) (Homo sapiens (Human)).